A 217-amino-acid chain; its full sequence is 3,4-dihydroxy-2-butanone 4-phosphate synthase (217 aa).

D-ribulose 5-phosphate-binding positions include 37 to 38 (RE), Asp-42, 150 to 154 (RGGHT), and Glu-174. Glu-38 is a binding site for Mg(2+). Mg(2+) is bound at residue His-153.

Belongs to the DHBP synthase family. Homodimer. Mg(2+) serves as cofactor. Requires Mn(2+) as cofactor.

It catalyses the reaction D-ribulose 5-phosphate = (2S)-2-hydroxy-3-oxobutyl phosphate + formate + H(+). Its pathway is cofactor biosynthesis; riboflavin biosynthesis; 2-hydroxy-3-oxobutyl phosphate from D-ribulose 5-phosphate: step 1/1. Its function is as follows. Catalyzes the conversion of D-ribulose 5-phosphate to formate and 3,4-dihydroxy-2-butanone 4-phosphate. This Sodalis glossinidius (strain morsitans) protein is 3,4-dihydroxy-2-butanone 4-phosphate synthase.